The sequence spans 904 residues: Translation initiation factor IF-2 (904 aa).

Disordered regions lie at residues arginine 134–valine 248 and histidine 267–proline 315. The span at arginine 136–glutamate 177 shows a compositional bias: basic and acidic residues. 2 stretches are compositionally biased toward low complexity: residues glutamate 178–alanine 230 and glycine 285–asparagine 303. A tr-type G domain is found at threonine 403–lysine 572. Residues glycine 412–threonine 419 are G1. Glycine 412–threonine 419 contributes to the GTP binding site. The G2 stretch occupies residues glycine 437–histidine 441. Residues aspartate 458 to glycine 461 form a G3 region. Residues aspartate 458–histidine 462 and asparagine 512–aspartate 515 contribute to the GTP site. The G4 stretch occupies residues asparagine 512–aspartate 515. Residues serine 548–lysine 550 form a G5 region.

This sequence belongs to the TRAFAC class translation factor GTPase superfamily. Classic translation factor GTPase family. IF-2 subfamily.

It is found in the cytoplasm. Functionally, one of the essential components for the initiation of protein synthesis. Protects formylmethionyl-tRNA from spontaneous hydrolysis and promotes its binding to the 30S ribosomal subunits. Also involved in the hydrolysis of GTP during the formation of the 70S ribosomal complex. The protein is Translation initiation factor IF-2 of Xanthomonas oryzae pv. oryzae (strain PXO99A).